A 354-amino-acid chain; its full sequence is Probable L-ascorbate-6-phosphate lactonase UlaG (354 aa).

Belongs to the UlaG family. Requires a divalent metal cation as cofactor.

The protein resides in the cytoplasm. It carries out the reaction L-ascorbate 6-phosphate + H2O = 3-dehydro-L-gulonate 6-phosphate. The protein operates within cofactor degradation; L-ascorbate degradation; D-xylulose 5-phosphate from L-ascorbate: step 1/4. In terms of biological role, probably catalyzes the hydrolysis of L-ascorbate-6-P into 3-keto-L-gulonate-6-P. Is essential for L-ascorbate utilization under anaerobic conditions. The protein is Probable L-ascorbate-6-phosphate lactonase UlaG of Shigella boydii serotype 18 (strain CDC 3083-94 / BS512).